We begin with the raw amino-acid sequence, 244 residues long: SPX domain-containing protein 6 (244 aa).

Residues 1–147 (MKFGKLLKRQ…GGALAAPVAE (147 aa)) form the SPX domain. The tract at residues 212 to 244 (GSSTHGRHSLPPLTLPDSDWLRSFQPPSPIPIQ) is disordered.

This Oryza sativa subsp. indica (Rice) protein is SPX domain-containing protein 6 (SPX6).